A 353-amino-acid polypeptide reads, in one-letter code: Ribosomal RNA small subunit methyltransferase H (353 aa).

Residues 39–41, Asp58, Phe90, Asp108, and Gln115 contribute to the S-adenosyl-L-methionine site; that span reads AGH. The disordered stretch occupies residues 334 to 353; that stretch reads SEDGVRGAHGHRRRTQARRG. The segment covering 341-353 has biased composition (basic residues); sequence AHGHRRRTQARRG.

This sequence belongs to the methyltransferase superfamily. RsmH family.

It is found in the cytoplasm. The enzyme catalyses cytidine(1402) in 16S rRNA + S-adenosyl-L-methionine = N(4)-methylcytidine(1402) in 16S rRNA + S-adenosyl-L-homocysteine + H(+). Functionally, specifically methylates the N4 position of cytidine in position 1402 (C1402) of 16S rRNA. The chain is Ribosomal RNA small subunit methyltransferase H from Bifidobacterium animalis subsp. lactis (strain AD011).